Here is a 190-residue protein sequence, read N- to C-terminus: Ladderlectin (190 aa).

Positions 1–18 (MAMLTISLLLCAAVALNG) are cleaved as a signal peptide. A C-type lectin domain is found at 60 to 179 (GSRCFMFVET…GNSFPSGVLQ (120 aa)). Cysteine 153 and cysteine 169 form a disulfide bridge.

As to quaternary structure, multimeric. As to expression, expressed in cells of the branchial epithelium, hepatic sinusoids, biliary epithelium, renal interstitium, skin, and sub-mucosal granular layer of the intestine. Highly expressed in caudal kidney. Moderately expressed in liver. Weakly expressed in gill, spleen, cranial kidney and skin. Isoform 1 is highly expressed in intestine. Isoform 2 is weakly expressed in intestine.

Lectin that binds sepharose in a calcium-dependent manner. This chain is Ladderlectin, found in Oncorhynchus mykiss (Rainbow trout).